Here is a 640-residue protein sequence, read N- to C-terminus: Spindle assembly abnormal protein 6 homolog (640 aa).

Positions 40–92 (VHKKDLAVRLTDDADPFFLYNLVISEEDFQSLKSQQGLLVDFSAFPQKFIDLL) constitute a PISA domain. Residues 154–475 (LARCLKCLKE…KQLLKTNENV (322 aa)) are a coiled coil.

Nine homodimers form a cartwheel structure with an internal diameter of 23 nM and radial spokes connecting to the microtubule triplets.

The protein resides in the cytoplasm. Its subcellular location is the cytoskeleton. It localises to the microtubule organizing center. It is found in the centrosome. In terms of biological role, central scaffolding component of the centrioles ensuring their 9-fold symmetry. Required for centrosome biogenesis and duplication: required both for mother-centriole-dependent centriole duplication and deuterosome-dependent centriole amplification in multiciliated cells. This Gallus gallus (Chicken) protein is Spindle assembly abnormal protein 6 homolog (SASS6).